A 434-amino-acid chain; its full sequence is MPNFQKPFSGSSDGNSVMNDLGNKVAIKVFDCRSAQDGSEEQNVNVTTNQMYLMFQSNNYNVPPPNYNTEDLGSQGPPTHAYYAPFQHPIHLQPPVPPVYKNNTYSATDQYSDSSFPNTSGHTPVIDSNYYNDALASIPTTTTGSTTMTTDNGNTIDSEEYIDNMEVFSSEENENIDNVKQTDLKSEKDSSLLSAASIVKKEQLSGFENFLPLSKTESPLVTADEIKSSLNLENIDNADSMSFKLKTSPIRKHFHVKPKRITRVRTGRVSHNIIEKKYRSNINDKIEQLRRTVPTLRVAYKKCNDLPITSRDLADLDGLEPATKLNKASILTKSIEYICHLERKCLQLSLANQHLSNDTRDSFVHLTEPSQPLSDNSSSEQVQKQTRSCQRQRQRQPRQQQPLHNIQYNIPHQNGLMSGTNNSHDMDFNNAGDF.

Residues 266-341 enclose the bHLH domain; that stretch reads TGRVSHNIIE…TKSIEYICHL (76 aa). A disordered region spans residues 365–434; it reads HLTEPSQPLS…DMDFNNAGDF (70 aa). 2 stretches are compositionally biased toward polar residues: residues 368–382 and 402–423; these read EPSQ…SEQV and PLHN…TNNS.

Interacts with the G1/S-specific cyclin PCL1. Post-translationally, phosphorylated by the cyclin-CDK complex PCL1-PHO85.

The protein localises to the nucleus. Functionally, involved in exit from mitosis and pseudohyphal differentiation. This chain is Probable transcription factor HMS1 (HMS1), found in Saccharomyces cerevisiae (strain ATCC 204508 / S288c) (Baker's yeast).